The primary structure comprises 202 residues: FMN-dependent NADH:quinone oxidoreductase 2 (202 aa).

FMN is bound by residues Ser-9, 15 to 17 (SAS), and 95 to 98 (MWNL).

Belongs to the azoreductase type 1 family. In terms of assembly, homodimer. FMN serves as cofactor.

It catalyses the reaction 2 a quinone + NADH + H(+) = 2 a 1,4-benzosemiquinone + NAD(+). It carries out the reaction N,N-dimethyl-1,4-phenylenediamine + anthranilate + 2 NAD(+) = 2-(4-dimethylaminophenyl)diazenylbenzoate + 2 NADH + 2 H(+). In terms of biological role, quinone reductase that provides resistance to thiol-specific stress caused by electrophilic quinones. Its function is as follows. Also exhibits azoreductase activity. Catalyzes the reductive cleavage of the azo bond in aromatic azo compounds to the corresponding amines. The polypeptide is FMN-dependent NADH:quinone oxidoreductase 2 (Hahella chejuensis (strain KCTC 2396)).